The sequence spans 211 residues: Probable cytokinin riboside 5'-monophosphate phosphoribohydrolase LOGL3 (211 aa).

Residues Glu-84, 102–103 (RK), 119–125 (GYGTLEE), and Thr-131 contribute to the substrate site.

Belongs to the LOG family. As to expression, expressed in roots, leaves, stems, tiller buds, shoot apex, immature inflorescences and flowers.

The catalysed reaction is N(6)-(dimethylallyl)adenosine 5'-phosphate + H2O = N(6)-dimethylallyladenine + D-ribose 5-phosphate. It carries out the reaction 9-ribosyl-trans-zeatin 5'-phosphate + H2O = trans-zeatin + D-ribose 5-phosphate. Cytokinin-activating enzyme working in the direct activation pathway. Phosphoribohydrolase that converts inactive cytokinin nucleotides to the biologically active free-base forms. This Oryza sativa subsp. japonica (Rice) protein is Probable cytokinin riboside 5'-monophosphate phosphoribohydrolase LOGL3 (LOGL3).